The chain runs to 238 residues: Phosphoribosylaminoimidazole-succinocarboxamide synthase (238 aa).

Belongs to the SAICAR synthetase family.

The catalysed reaction is 5-amino-1-(5-phospho-D-ribosyl)imidazole-4-carboxylate + L-aspartate + ATP = (2S)-2-[5-amino-1-(5-phospho-beta-D-ribosyl)imidazole-4-carboxamido]succinate + ADP + phosphate + 2 H(+). Its pathway is purine metabolism; IMP biosynthesis via de novo pathway; 5-amino-1-(5-phospho-D-ribosyl)imidazole-4-carboxamide from 5-amino-1-(5-phospho-D-ribosyl)imidazole-4-carboxylate: step 1/2. In Methanococcoides burtonii (strain DSM 6242 / NBRC 107633 / OCM 468 / ACE-M), this protein is Phosphoribosylaminoimidazole-succinocarboxamide synthase.